The primary structure comprises 206 residues: MNKPIYFSKFLVTEQVFYKSKYTYALVNLKPIVPGHVLIVPLRTTVLNLSDLTMPESQDYFKTLQLIHRFIKWQYKADSINVAIQDGPEAGQSVPHLHTHIIPRYKINNVGDLIYDKLDHWDGNGTLTDWQGRRDEYLGVGGRQARKNNSTSATVDGDELSQGPNVLKPDSQRKVRALTEMKKEAEDLQARLEEFVSSDPGLTQWL.

The HIT domain maps to lysine 3–tyrosine 115. A Histidine triad motif motif is present at residues histidine 96 to histidine 100. Histidine 98 serves as the catalytic Tele-AMP-histidine intermediate. Residues arginine 143–proline 164 form a disordered region.

As to quaternary structure, homodimer. Mn(2+) serves as cofactor.

The protein resides in the cytoplasm. The protein localises to the nucleus. It localises to the mitochondrion. It catalyses the reaction P(1),P(3)-bis(5'-adenosyl) triphosphate + H2O = AMP + ADP + 2 H(+). Cleaves A-5'-PPP-5'A to yield AMP and ADP. Can cleave all dinucleoside polyphosphates, provided the phosphate chain contains at least 3 phosphates and that 1 of the 2 bases composing the nucleotide is a purine. Is most effective on dinucleoside triphosphates. Negatively regulates intracellular dinucleoside polyphosphate levels, which elevate following heat shock. The polypeptide is Bis(5'-adenosyl)-triphosphatase (HNT2) (Saccharomyces cerevisiae (strain RM11-1a) (Baker's yeast)).